Here is a 623-residue protein sequence, read N- to C-terminus: Probable methyltransferase PMT8 (623 aa).

Topologically, residues 1–13 (MMRGRSDGGLKKR) are cytoplasmic. Residues 14–34 (LIASVCVVALFVCFLFMYYGS) form a helical; Signal-anchor for type II membrane protein membrane-spanning segment. The Lumenal segment spans residues 35-623 (SSQGASALEY…LTSESLRDSE (589 aa)). Asparagine 204, asparagine 350, and asparagine 588 each carry an N-linked (GlcNAc...) asparagine glycan.

It belongs to the methyltransferase superfamily.

The protein localises to the golgi apparatus membrane. The chain is Probable methyltransferase PMT8 from Arabidopsis thaliana (Mouse-ear cress).